A 416-amino-acid polypeptide reads, in one-letter code: Adenylosuccinate synthetase (416 aa).

GTP is bound by residues 13–19 (GDEGKGK) and 41–43 (GHT). Aspartate 14 serves as the catalytic Proton acceptor. Mg(2+) contacts are provided by aspartate 14 and glycine 41. IMP contacts are provided by residues 14 to 17 (DEGK), 39 to 42 (NAGH), threonine 126, arginine 140, glutamine 220, threonine 235, and arginine 299. The active-site Proton donor is histidine 42. 295–301 (VSTGRKR) contributes to the substrate binding site. GTP-binding positions include arginine 301, 327–329 (KLD), and 405–407 (STS).

This sequence belongs to the adenylosuccinate synthetase family. As to quaternary structure, homodimer. The cofactor is Mg(2+).

It is found in the cytoplasm. It catalyses the reaction IMP + L-aspartate + GTP = N(6)-(1,2-dicarboxyethyl)-AMP + GDP + phosphate + 2 H(+). The protein operates within purine metabolism; AMP biosynthesis via de novo pathway; AMP from IMP: step 1/2. Plays an important role in the de novo pathway of purine nucleotide biosynthesis. Catalyzes the first committed step in the biosynthesis of AMP from IMP. This chain is Adenylosuccinate synthetase, found in Campylobacter jejuni subsp. jejuni serotype O:2 (strain ATCC 700819 / NCTC 11168).